Here is a 394-residue protein sequence, read N- to C-terminus: Elongation factor Tu (394 aa).

In terms of domain architecture, tr-type G spans Lys10–Gln204. Residues Gly19–Thr26 form a G1 region. Residue Gly19–Thr26 participates in GTP binding. Thr26 is a Mg(2+) binding site. A G2 region spans residues Gly60–Asn64. A G3 region spans residues Asp81 to Gly84. Residues Asp81–His85 and Asn136–Asp139 each bind GTP. The tract at residues Asn136–Asp139 is G4. The G5 stretch occupies residues Ser174–Leu176.

It belongs to the TRAFAC class translation factor GTPase superfamily. Classic translation factor GTPase family. EF-Tu/EF-1A subfamily. As to quaternary structure, monomer.

Its subcellular location is the cytoplasm. The enzyme catalyses GTP + H2O = GDP + phosphate + H(+). GTP hydrolase that promotes the GTP-dependent binding of aminoacyl-tRNA to the A-site of ribosomes during protein biosynthesis. The polypeptide is Elongation factor Tu (Hamiltonella defensa subsp. Acyrthosiphon pisum (strain 5AT)).